Reading from the N-terminus, the 678-residue chain is Methionine--tRNA ligase (678 aa).

Residues Pro-12–His-22 carry the 'HIGH' region motif. Zn(2+) contacts are provided by Cys-143, Cys-146, Cys-156, and Cys-159. The 'KMSKS' region motif lies at Lys-328–Ser-332. Residue Lys-331 participates in ATP binding. The 102-residue stretch at Asp-577–Lys-678 folds into the tRNA-binding domain.

This sequence belongs to the class-I aminoacyl-tRNA synthetase family. MetG type 1 subfamily. In terms of assembly, homodimer. The cofactor is Zn(2+).

It localises to the cytoplasm. It carries out the reaction tRNA(Met) + L-methionine + ATP = L-methionyl-tRNA(Met) + AMP + diphosphate. In terms of biological role, is required not only for elongation of protein synthesis but also for the initiation of all mRNA translation through initiator tRNA(fMet) aminoacylation. This is Methionine--tRNA ligase from Acidithiobacillus ferrooxidans (strain ATCC 23270 / DSM 14882 / CIP 104768 / NCIMB 8455) (Ferrobacillus ferrooxidans (strain ATCC 23270)).